The primary structure comprises 351 residues: tRNA-splicing endonuclease (351 aa).

Active-site residues include Y287, H298, and K329.

It belongs to the tRNA-intron endonuclease family. Archaeal long subfamily. In terms of assembly, homodimer.

It carries out the reaction pretRNA = a 3'-half-tRNA molecule with a 5'-OH end + a 5'-half-tRNA molecule with a 2',3'-cyclic phosphate end + an intron with a 2',3'-cyclic phosphate and a 5'-hydroxyl terminus.. Its function is as follows. Endonuclease that removes tRNA introns. Cleaves pre-tRNA at the 5'- and 3'-splice sites to release the intron. The products are an intron and two tRNA half-molecules bearing 2',3' cyclic phosphate and 5'-OH termini. Recognizes a pseudosymmetric substrate in which 2 bulged loops of 3 bases are separated by a stem of 4 bp. This chain is tRNA-splicing endonuclease, found in Methanococcoides burtonii (strain DSM 6242 / NBRC 107633 / OCM 468 / ACE-M).